The sequence spans 268 residues: Ribosomal RNA large subunit methyltransferase E (268 aa).

Positions 50, 52, 68, 84, and 109 each coordinate S-adenosyl-L-methionine. The active-site Proton acceptor is the Lys-149. The TRAM domain maps to 196–254; sequence PLRKGDKFVVDIEKLGSSGDGAVLIEGFVVFVKEVEVGEKVRIKISDVKPNFAFADVEE.

This sequence belongs to the class I-like SAM-binding methyltransferase superfamily. RNA methyltransferase RlmE family.

It localises to the cytoplasm. The enzyme catalyses uridine(2552) in 23S rRNA + S-adenosyl-L-methionine = 2'-O-methyluridine(2552) in 23S rRNA + S-adenosyl-L-homocysteine + H(+). Specifically methylates the uridine in position 2552 of 23S rRNA at the 2'-O position of the ribose in the fully assembled 50S ribosomal subunit. The protein is Ribosomal RNA large subunit methyltransferase E of Methanosarcina mazei (strain ATCC BAA-159 / DSM 3647 / Goe1 / Go1 / JCM 11833 / OCM 88) (Methanosarcina frisia).